Consider the following 253-residue polypeptide: Triosephosphate isomerase, cytosolic (253 aa).

Substrate is bound by residues asparagine 10 and lysine 12. Histidine 96 serves as the catalytic Electrophile. Glutamate 166 functions as the Proton acceptor in the catalytic mechanism.

The protein belongs to the triosephosphate isomerase family. In terms of assembly, homodimer.

The protein resides in the cytoplasm. The catalysed reaction is D-glyceraldehyde 3-phosphate = dihydroxyacetone phosphate. The protein operates within carbohydrate biosynthesis; gluconeogenesis. Its pathway is carbohydrate degradation; glycolysis; D-glyceraldehyde 3-phosphate from glycerone phosphate: step 1/1. This chain is Triosephosphate isomerase, cytosolic, found in Secale cereale (Rye).